A 563-amino-acid chain; its full sequence is Vacuolar protein sorting-associated protein 45 (563 aa).

It belongs to the STXBP/unc-18/SEC1 family.

Its subcellular location is the golgi apparatus membrane. The protein resides in the endosome membrane. Functionally, may play a role in vesicle-mediated protein trafficking from the Golgi stack through the trans-Golgi network. The protein is Vacuolar protein sorting-associated protein 45 (vps45) of Dictyostelium discoideum (Social amoeba).